Consider the following 379-residue polypeptide: Probable G-protein coupled receptor 27 (379 aa).

At 1-26 (MANASEPGGGGSGGGAEAAALGLRLA) the chain is on the extracellular side. An N-linked (GlcNAc...) asparagine glycan is attached at N3. A helical transmembrane segment spans residues 27–47 (TLSLLLCVSLAGNVLFALLIV). Residues 48–58 (RERSLHRAPYY) lie on the Cytoplasmic side of the membrane. Residues 59–79 (LLLDLCLADGLRALACLPAVM) form a helical membrane-spanning segment. At 80–100 (LAARRAAAAAGTPPGALGCKL) the chain is on the extracellular side. C98 and C175 are joined by a disulfide. A helical membrane pass occupies residues 101 to 121 (LAFLAALFCFHAAFLLLGVGV). The Cytoplasmic segment spans residues 122 to 142 (TRYLAIAHHRFYAERLAGWPC). A helical membrane pass occupies residues 143–163 (AAMLVCAAWALALAAAFPPVL). Residues 164–185 (DGGGADDEDAPCALEQRPDGAP) lie on the Extracellular side of the membrane. Residues 186–206 (GALGFLLLLAAVVGATHLVYL) form a helical membrane-spanning segment. The Cytoplasmic portion of the chain corresponds to 207-289 (RLLFFIHDRR…FKTEKRLCKM (83 aa)). The chain crosses the membrane as a helical span at residues 290-310 (FYAITLLFLLLWGPYVVASYL). The Extracellular segment spans residues 311–324 (RVLVRPGAVPQAYL). A helical membrane pass occupies residues 325-345 (TASVWLTFAQAGINPVVCFLF). Topologically, residues 346–379 (NRELRDCFRAQFPCCQSPQATQATLPCDLKGIGL) are cytoplasmic.

This sequence belongs to the G-protein coupled receptor 1 family.

It localises to the cell membrane. Functionally, orphan receptor. Possible candidate for amine-like G-protein coupled receptor. This Mus musculus (Mouse) protein is Probable G-protein coupled receptor 27 (Gpr27).